The primary structure comprises 389 residues: Chalcone synthase 4-2 (389 aa).

Cys-164 is a catalytic residue.

Belongs to the thiolase-like superfamily. Chalcone/stilbene synthases family.

It catalyses the reaction (E)-4-coumaroyl-CoA + 3 malonyl-CoA + 3 H(+) = 2',4,4',6'-tetrahydroxychalcone + 3 CO2 + 4 CoA. It participates in secondary metabolite biosynthesis; flavonoid biosynthesis. The primary product of this enzyme is 4,2',4',6'-tetrahydroxychalcone (also termed naringenin-chalcone or chalcone) which can under specific conditions spontaneously isomerize into naringenin. The sequence is that of Chalcone synthase 4-2 (CHS4-2) from Medicago sativa (Alfalfa).